We begin with the raw amino-acid sequence, 284 residues long: Bifunctional protein FolD (284 aa).

Residues 164–166 (GRS) and Ser-189 contribute to the NADP(+) site.

The protein belongs to the tetrahydrofolate dehydrogenase/cyclohydrolase family. In terms of assembly, homodimer.

It carries out the reaction (6R)-5,10-methylene-5,6,7,8-tetrahydrofolate + NADP(+) = (6R)-5,10-methenyltetrahydrofolate + NADPH. The enzyme catalyses (6R)-5,10-methenyltetrahydrofolate + H2O = (6R)-10-formyltetrahydrofolate + H(+). The protein operates within one-carbon metabolism; tetrahydrofolate interconversion. Its function is as follows. Catalyzes the oxidation of 5,10-methylenetetrahydrofolate to 5,10-methenyltetrahydrofolate and then the hydrolysis of 5,10-methenyltetrahydrofolate to 10-formyltetrahydrofolate. This is Bifunctional protein FolD from Listeria welshimeri serovar 6b (strain ATCC 35897 / DSM 20650 / CCUG 15529 / CIP 8149 / NCTC 11857 / SLCC 5334 / V8).